The sequence spans 287 residues: ATP synthase gamma chain (287 aa).

Belongs to the ATPase gamma chain family. In terms of assembly, F-type ATPases have 2 components, CF(1) - the catalytic core - and CF(0) - the membrane proton channel. CF(1) has five subunits: alpha(3), beta(3), gamma(1), delta(1), epsilon(1). CF(0) has three main subunits: a, b and c.

The protein resides in the cell inner membrane. Its function is as follows. Produces ATP from ADP in the presence of a proton gradient across the membrane. The gamma chain is believed to be important in regulating ATPase activity and the flow of protons through the CF(0) complex. The chain is ATP synthase gamma chain from Yersinia enterocolitica serotype O:8 / biotype 1B (strain NCTC 13174 / 8081).